A 392-amino-acid chain; its full sequence is Norsolorinic acid reductase B (392 aa).

Residue aspartate 75 participates in NADP(+) binding. Tyrosine 80 serves as the catalytic Proton donor. Residues 184 to 185, glutamine 210, 239 to 249, and 311 to 319 each bind NADP(+); these read SD, GTLGQGSFQTE, and RKLEHIQGN. The segment at 242–263 is disordered; sequence GQGSFQTEEGRKQREKDNPGRK. Residues 249–261 are compositionally biased toward basic and acidic residues; that stretch reads EEGRKQREKDNPG.

The protein belongs to the aldo/keto reductase family. Aldo/keto reductase 2 subfamily.

It participates in mycotoxin biosynthesis. Functionally, norsolorinic acid reductase; part of the fragmented gene cluster that mediates the biosynthesis of dothistromin (DOTH), a polyketide toxin very similar in structure to the aflatoxin precursor, versicolorin B. The first step of the pathway is the conversion of acetate to norsolorinic acid (NOR) and requires the fatty acid synthase subunits hexA and hexB, as well as the polyketide synthase pksA. PksA combines a hexanoyl starter unit and 7 malonyl-CoA extender units to synthesize the precursor NOR. The hexanoyl starter unit is provided to the acyl-carrier protein (ACP) domain by the fungal fatty acid synthase hexA/hexB. The second step is the conversion of NOR to averantin (AVN) and requires the norsolorinic acid ketoreductase nor1, which catalyzes the dehydration of norsolorinic acid to form (1'S)-averantin. The cytochrome P450 monooxygenase avnA then catalyzes the hydroxylation of AVN to 5'hydroxyaverantin (HAVN). The next step is performed by adhA that transforms HAVN to averufin (AVF). Averufin might then be converted to hydroxyversicolorone by cypX and avfA. Hydroxyversicolorone is further converted versiconal hemiacetal acetate (VHA) by moxY. VHA is then the substrate for the versiconal hemiacetal acetate esterase est1 to yield versiconal (VAL). Versicolorin B synthase vbsA then converts VAL to versicolorin B (VERB) by closing the bisfuran ring. Then, the activity of the versicolorin B desaturase verB leads to versicolorin A (VERA). DotB, a predicted chloroperoxidase, may perform epoxidation of the A-ring of VERA. Alternatively, a cytochrome P450, such as cypX or avnA could catalyze this step. It is also possible that another, uncharacterized, cytochrome P450 enzyme is responsible for this step. Opening of the epoxide could potentially be achieved by the epoxide hydrolase epoA. However, epoA seems not to be required for DOTH biosynthesis, but other epoxide hydrolases may have the ability to complement this hydrolysis. Alternatively, opening of the epoxide ring could be achieved non-enzymatically. The next step is the deoxygenation of ring A to yield the 5,8-dihydroxyanthraquinone which is most likely catalyzed by the NADPH dehydrogenase encoded by ver1. The last stages of DOTH biosynthesis are proposed to involve hydroxylation of the bisfuran. OrdB and norB might have oxidative roles here. An alternative possibility is that cytochrome P450 monoogenases such as avnA and cypX might perform these steps in addition to previously proposed steps. This chain is Norsolorinic acid reductase B, found in Dothistroma septosporum (strain NZE10 / CBS 128990) (Red band needle blight fungus).